The sequence spans 312 residues: 4-hydroxy-3-methylbut-2-enyl diphosphate reductase (312 aa).

Residue Cys-15 coordinates [4Fe-4S] cluster. Residues His-44 and His-77 each contribute to the (2E)-4-hydroxy-3-methylbut-2-enyl diphosphate site. Dimethylallyl diphosphate is bound by residues His-44 and His-77. His-44 and His-77 together coordinate isopentenyl diphosphate. Residue Cys-99 coordinates [4Fe-4S] cluster. Residue His-127 coordinates (2E)-4-hydroxy-3-methylbut-2-enyl diphosphate. His-127 provides a ligand contact to dimethylallyl diphosphate. His-127 is a binding site for isopentenyl diphosphate. Glu-129 serves as the catalytic Proton donor. (2E)-4-hydroxy-3-methylbut-2-enyl diphosphate is bound at residue Thr-167. Cys-197 lines the [4Fe-4S] cluster pocket. 4 residues coordinate (2E)-4-hydroxy-3-methylbut-2-enyl diphosphate: Ser-225, Ser-226, Asn-227, and Ser-269. Residues Ser-225, Ser-226, Asn-227, and Ser-269 each coordinate dimethylallyl diphosphate. Isopentenyl diphosphate contacts are provided by Ser-225, Ser-226, Asn-227, and Ser-269.

It belongs to the IspH family. The cofactor is [4Fe-4S] cluster.

The catalysed reaction is isopentenyl diphosphate + 2 oxidized [2Fe-2S]-[ferredoxin] + H2O = (2E)-4-hydroxy-3-methylbut-2-enyl diphosphate + 2 reduced [2Fe-2S]-[ferredoxin] + 2 H(+). It carries out the reaction dimethylallyl diphosphate + 2 oxidized [2Fe-2S]-[ferredoxin] + H2O = (2E)-4-hydroxy-3-methylbut-2-enyl diphosphate + 2 reduced [2Fe-2S]-[ferredoxin] + 2 H(+). The protein operates within isoprenoid biosynthesis; dimethylallyl diphosphate biosynthesis; dimethylallyl diphosphate from (2E)-4-hydroxy-3-methylbutenyl diphosphate: step 1/1. It functions in the pathway isoprenoid biosynthesis; isopentenyl diphosphate biosynthesis via DXP pathway; isopentenyl diphosphate from 1-deoxy-D-xylulose 5-phosphate: step 6/6. In terms of biological role, catalyzes the conversion of 1-hydroxy-2-methyl-2-(E)-butenyl 4-diphosphate (HMBPP) into a mixture of isopentenyl diphosphate (IPP) and dimethylallyl diphosphate (DMAPP). Acts in the terminal step of the DOXP/MEP pathway for isoprenoid precursor biosynthesis. This is 4-hydroxy-3-methylbut-2-enyl diphosphate reductase from Azoarcus sp. (strain BH72).